A 249-amino-acid polypeptide reads, in one-letter code: 5'-nucleotidase SurE (249 aa).

Residues Asp-9, Asp-10, Ser-40, and Asn-92 each coordinate a divalent metal cation.

The protein belongs to the SurE nucleotidase family. A divalent metal cation serves as cofactor.

Its subcellular location is the cytoplasm. The catalysed reaction is a ribonucleoside 5'-phosphate + H2O = a ribonucleoside + phosphate. In terms of biological role, nucleotidase that shows phosphatase activity on nucleoside 5'-monophosphates. This is 5'-nucleotidase SurE from Shewanella sp. (strain MR-4).